The chain runs to 446 residues: Chromosomal replication initiator protein DnaA (446 aa).

Positions 1–81 (MENISDLWNS…AKLAIRFIIP (81 aa)) are domain I, interacts with DnaA modulators. The domain II stretch occupies residues 81–109 (PQSQAEEDIDLPPVKRNPAQDDSAHLPQS). The segment at 110–326 (MLNPKYTFDT…GALIRVVAYS (217 aa)) is domain III, AAA+ region. The ATP site is built by Gly154, Gly156, Lys157, and Thr158. Positions 327 to 446 (SLINKDINAD…QVEEINGILK (120 aa)) are domain IV, binds dsDNA.

It belongs to the DnaA family. As to quaternary structure, oligomerizes as a right-handed, spiral filament on DNA at oriC.

The protein localises to the cytoplasm. Its function is as follows. Plays an essential role in the initiation and regulation of chromosomal replication. ATP-DnaA binds to the origin of replication (oriC) to initiate formation of the DNA replication initiation complex once per cell cycle. Binds the DnaA box (a 9 base pair repeat at the origin) and separates the double-stranded (ds)DNA. Forms a right-handed helical filament on oriC DNA; dsDNA binds to the exterior of the filament while single-stranded (ss)DNA is stabiized in the filament's interior. The ATP-DnaA-oriC complex binds and stabilizes one strand of the AT-rich DNA unwinding element (DUE), permitting loading of DNA polymerase. After initiation quickly degrades to an ADP-DnaA complex that is not apt for DNA replication. Binds acidic phospholipids. The polypeptide is Chromosomal replication initiator protein DnaA (Bacillus cereus (strain G9842)).